A 337-amino-acid chain; its full sequence is Lipoyl synthase (337 aa).

Positions 81, 86, 92, 107, 111, 114, and 323 each coordinate [4Fe-4S] cluster. The Radical SAM core domain occupies Phe-93–Ser-312.

It belongs to the radical SAM superfamily. Lipoyl synthase family. [4Fe-4S] cluster is required as a cofactor.

It is found in the cytoplasm. The enzyme catalyses [[Fe-S] cluster scaffold protein carrying a second [4Fe-4S](2+) cluster] + N(6)-octanoyl-L-lysyl-[protein] + 2 oxidized [2Fe-2S]-[ferredoxin] + 2 S-adenosyl-L-methionine + 4 H(+) = [[Fe-S] cluster scaffold protein] + N(6)-[(R)-dihydrolipoyl]-L-lysyl-[protein] + 4 Fe(3+) + 2 hydrogen sulfide + 2 5'-deoxyadenosine + 2 L-methionine + 2 reduced [2Fe-2S]-[ferredoxin]. It functions in the pathway protein modification; protein lipoylation via endogenous pathway; protein N(6)-(lipoyl)lysine from octanoyl-[acyl-carrier-protein]: step 2/2. Its function is as follows. Catalyzes the radical-mediated insertion of two sulfur atoms into the C-6 and C-8 positions of the octanoyl moiety bound to the lipoyl domains of lipoate-dependent enzymes, thereby converting the octanoylated domains into lipoylated derivatives. In Xanthomonas campestris pv. campestris (strain B100), this protein is Lipoyl synthase.